The sequence spans 200 residues: MARYTGPSWKLSRRLGISLSGTGKELEKRPYAPGPHGPGQRKKLSEYGLQLQEKQKLRHMYGVNERQFRTLFDKAAKMTGKHGENFMILLDARLDNVVYKLGLARTRRQARQLVNHGHILVDGSRVDIPSYQVKPGQTIGVREKSRNLSIIKESVEVNNFVPEYLTFDAEKLEGTFTRLPERSELAPEINEALIVEFYSR.

The interval 22 to 42 (TGKELEKRPYAPGPHGPGQRK) is disordered. The 64-residue stretch at 92-155 (ARLDNVVYKL…RNLSIIKESV (64 aa)) folds into the S4 RNA-binding domain.

Belongs to the universal ribosomal protein uS4 family. Part of the 30S ribosomal subunit. Contacts protein S5. The interaction surface between S4 and S5 is involved in control of translational fidelity.

One of the primary rRNA binding proteins, it binds directly to 16S rRNA where it nucleates assembly of the body of the 30S subunit. Functionally, with S5 and S12 plays an important role in translational accuracy. This is Small ribosomal subunit protein uS4 from Bacillus velezensis (strain DSM 23117 / BGSC 10A6 / LMG 26770 / FZB42) (Bacillus amyloliquefaciens subsp. plantarum).